The sequence spans 207 residues: Ribosomal RNA small subunit methyltransferase G (207 aa).

Residues Gly-73, Leu-78, 124–125 (VE), and Arg-139 each bind S-adenosyl-L-methionine.

Belongs to the methyltransferase superfamily. RNA methyltransferase RsmG family.

The protein resides in the cytoplasm. The catalysed reaction is guanosine(527) in 16S rRNA + S-adenosyl-L-methionine = N(7)-methylguanosine(527) in 16S rRNA + S-adenosyl-L-homocysteine. Its function is as follows. Specifically methylates the N7 position of guanine in position 527 of 16S rRNA. In Salmonella choleraesuis (strain SC-B67), this protein is Ribosomal RNA small subunit methyltransferase G.